The sequence spans 155 residues: SsrA-binding protein (155 aa).

The span at threonine 135–lysine 147 shows a compositional bias: basic and acidic residues. Positions threonine 135–arginine 155 are disordered.

Belongs to the SmpB family.

Its subcellular location is the cytoplasm. In terms of biological role, required for rescue of stalled ribosomes mediated by trans-translation. Binds to transfer-messenger RNA (tmRNA), required for stable association of tmRNA with ribosomes. tmRNA and SmpB together mimic tRNA shape, replacing the anticodon stem-loop with SmpB. tmRNA is encoded by the ssrA gene; the 2 termini fold to resemble tRNA(Ala) and it encodes a 'tag peptide', a short internal open reading frame. During trans-translation Ala-aminoacylated tmRNA acts like a tRNA, entering the A-site of stalled ribosomes, displacing the stalled mRNA. The ribosome then switches to translate the ORF on the tmRNA; the nascent peptide is terminated with the 'tag peptide' encoded by the tmRNA and targeted for degradation. The ribosome is freed to recommence translation, which seems to be the essential function of trans-translation. This Streptococcus pyogenes serotype M12 (strain MGAS2096) protein is SsrA-binding protein.